Reading from the N-terminus, the 867-residue chain is Ataxin-7 (867 aa).

Positions 1-15 are enriched in basic and acidic residues; the sequence is MSERAADDVRGEPRR. The segment at 1–59 is disordered; it reads MSERAADDVRGEPRRAAGGAAAARQQQQQPQPLQPQRQHPPLRRPRAEDGGTGDTTTSA. Residues 16-39 show a composition bias toward low complexity; sequence AAGGAAAARQQQQQPQPLQPQRQH. Lysine 222 carries the N6-acetyllysine modification. Residue lysine 243 forms a Glycyl lysine isopeptide (Lys-Gly) (interchain with G-Cter in SUMO); alternate linkage. Residue lysine 243 forms a Glycyl lysine isopeptide (Lys-Gly) (interchain with G-Cter in SUMO2); alternate linkage. The SCA7 domain maps to 320–387; sequence KRLSEREFDP…KAREKELIRH (68 aa). Residues 379–400 are compositionally biased toward basic and acidic residues; the sequence is AREKELIRHDSQQVPHPLRDPH. Disordered stretches follow at residues 379–483, 600–711, and 845–867; these read AREK…EESV, HGTT…SHSV, and TGNI…KARP. 2 stretches are compositionally biased toward pro residues: residues 426 to 437 and 447 to 462; these read PQTPSLPRPPGC and IDPP…PLPA. The segment covering 472–481 has biased composition (acidic residues); the sequence is EEGEGDDREE. Positions 619–647 are enriched in low complexity; sequence SVQSRQVSASSSPPSTPSGLSSVPSSPLS. Positions 649–659 are enriched in basic residues; sequence KPQKWKPSKSI. Positions 665-674 are enriched in polar residues; it reads SALSTNCHNA. The span at 689 to 711 shows a compositional bias: low complexity; the sequence is SSPLLVPSSSSSSSSSSSSSHSV. The span at 846 to 860 shows a compositional bias: polar residues; sequence GNISGAQGLTNNSLL.

This sequence belongs to the ataxin-7 family. In terms of assembly, component of the SAGA transcription coactivator-HAT complex, at least composed of SUPT3H, GCN5L2, TAF5L, TAF6L, SUPT7L, TADA3L, TAD1L, TAF10, TAF12, TRRAP, TAF9 and ATXN7. The STAGA core complex is associated with a subcomplex required for histone deubiquitination composed of ATXN7L3, ENY2 and USP22. Interacts with SORBS1, PSMC1 and CRX. Interacts with TRRAP, GCN5L2 and TAF10. Interacts with alpha tubulin. Proteolytically cleaved by caspase-7 (CASP7). Post-translationally, sumoylation has no effect on subcellular location or interaction with components of the STAGA complex. As to expression, widely expressed in adult tissues, with the highest expression in heart, brain, liver and kidney.

The protein resides in the nucleus. Its subcellular location is the nucleolus. It localises to the nucleus matrix. It is found in the cytoplasm. The protein localises to the cytoskeleton. Its function is as follows. Acts as a component of the SAGA (aka STAGA) transcription coactivator-HAT complex. Mediates the interaction of SAGA complex with the CRX and is involved in CRX-dependent gene activation. Probably involved in tethering the deubiquitination module within the SAGA complex. Necessary for microtubule cytoskeleton stabilization. Involved in neurodegeneration. The sequence is that of Ataxin-7 (Atxn7) from Mus musculus (Mouse).